Reading from the N-terminus, the 216-residue chain is tRNA (guanine-N(7)-)-methyltransferase (216 aa).

S-adenosyl-L-methionine contacts are provided by Glu43, Asp68, Asn95, and Asn117. Substrate-binding positions include Asp153 and 190–193 (TEYE).

The protein belongs to the class I-like SAM-binding methyltransferase superfamily. TrmB family.

It carries out the reaction guanosine(46) in tRNA + S-adenosyl-L-methionine = N(7)-methylguanosine(46) in tRNA + S-adenosyl-L-homocysteine. The protein operates within tRNA modification; N(7)-methylguanine-tRNA biosynthesis. In terms of biological role, catalyzes the formation of N(7)-methylguanine at position 46 (m7G46) in tRNA. The polypeptide is tRNA (guanine-N(7)-)-methyltransferase (Desulfitobacterium hafniense (strain Y51)).